We begin with the raw amino-acid sequence, 724 residues long: Catalase-peroxidase (724 aa).

Positions 98 to 226 form a cross-link, tryptophyl-tyrosyl-methioninium (Trp-Tyr) (with M-252); that stretch reads WHAAGSYRTA…LAAVQMGLIY (129 aa). H99 functions as the Proton acceptor in the catalytic mechanism. A cross-link (tryptophyl-tyrosyl-methioninium (Tyr-Met) (with W-98)) is located at residues 226-252; the sequence is YVNPQGVNGEPDPLRTALHVRETFARM. H267 is a heme b binding site.

This sequence belongs to the peroxidase family. Peroxidase/catalase subfamily. Homodimer or homotetramer. The cofactor is heme b. In terms of processing, formation of the three residue Trp-Tyr-Met cross-link is important for the catalase, but not the peroxidase activity of the enzyme.

It carries out the reaction H2O2 + AH2 = A + 2 H2O. The catalysed reaction is 2 H2O2 = O2 + 2 H2O. Functionally, bifunctional enzyme with both catalase and broad-spectrum peroxidase activity. The polypeptide is Catalase-peroxidase (Cereibacter sphaeroides (strain ATCC 17025 / ATH 2.4.3) (Rhodobacter sphaeroides)).